The primary structure comprises 341 residues: Delta(1)-pyrroline-2-carboxylate/Delta(1)-piperideine-2-carboxylate reductase (341 aa).

Ser-52 acts as the Charge relay system in catalysis. His-53 (proton donor) is an active-site residue. Arg-57 is a binding site for substrate. An NADP(+)-binding site is contributed by 125–129 (HFAAL). Thr-165 serves as a coordination point for substrate. 183 to 185 (DMA) contributes to the NADP(+) binding site. 191–192 (HG) lines the substrate pocket. The active-site Charge relay system is the Asp-193. NADP(+) contacts are provided by residues 235–236 (HK) and 308–314 (RMPGERR).

Belongs to the LDH2/MDH2 oxidoreductase family. As to quaternary structure, homodimer.

The catalysed reaction is L-pipecolate + NADP(+) = Delta(1)-piperideine-2-carboxylate + NADPH + H(+). It catalyses the reaction L-proline + NADP(+) = 1-pyrroline-2-carboxylate + NADPH + H(+). It carries out the reaction N-methyl-L-alanine + NADP(+) + H2O = methylamine + pyruvate + NADPH + H(+). Its activity is regulated as follows. Is inhibited by the substrate analog pyrrole-2-carboxylate, but not by N-formylphenylalanine. Its function is as follows. Catalyzes the reduction of both Delta(1)-pyrroline-2-carboxylate (Pyr2C) and Delta(1)-piperideine-2-carboxylate (Pip2C) to L-proline and L-pipecolate, respectively, using NADPH as the electron donor. Can use NADH instead of NADPH, although with much less efficiency. Plays an essential role in the catabolism of D-proline and D-lysine, which allows P.putida to grow on each of these amino-acids as a sole carbon source; D-lysine appears to be catabolized only through the pipecolate pathway. Can also catalyze the reverse oxidation reactions, albeit at a much lower rate. To a lesser extent, is able to catalyze in vitro the NADPH-dependent formation of N-alkyl-L-amino acids from the corresponding alpha-oxo acids and alkylamines, e.g. the formation of N-methylalanine from pyruvate and N-methylamine; cannot use ammonia as substrate for these reductive amination reactions. Shows neither malate dehydrogenase nor lactate dehydrogenase activity. This is Delta(1)-pyrroline-2-carboxylate/Delta(1)-piperideine-2-carboxylate reductase from Pseudomonas putida (Arthrobacter siderocapsulatus).